Here is a 297-residue protein sequence, read N- to C-terminus: tRNA pseudouridine synthase B (297 aa).

Asp-44 acts as the Nucleophile in catalysis.

This sequence belongs to the pseudouridine synthase TruB family. Type 1 subfamily.

It catalyses the reaction uridine(55) in tRNA = pseudouridine(55) in tRNA. Responsible for synthesis of pseudouridine from uracil-55 in the psi GC loop of transfer RNAs. In Mycobacterium sp. (strain JLS), this protein is tRNA pseudouridine synthase B.